The primary structure comprises 486 residues: Heme A synthase COX15 (486 aa).

The transit peptide at 1–33 directs the protein to the mitochondrion; it reads MLFRNIEVGRQAAKLLTRTSSRLAWQSIGASRN. At 34-85 the chain is on the mitochondrial matrix side; sequence ISTIRQQIRKTQLYNFKKTVSIRPFSLSSPVFKPHVASESNPIESRLKTSKN. Residues 86–106 traverse the membrane as a helical segment; that stretch reads VAYWLIGTSGLVFGIVVLGGL. The Mitochondrial intermembrane segment spans residues 107 to 170; the sequence is TRLTESGLSI…FIFFMEWIHR (64 aa). H169 is a heme o binding site. The chain crosses the membrane as a helical span at residues 171–191; that stretch reads LWGRAIGAVFILPAVYFAVSK. At 192-200 the chain is on the mitochondrial matrix side; it reads KTSGHVNKR. Residues 201 to 221 form a helical membrane-spanning segment; the sequence is LFGLAGLLGLQGFVGWWMVKS. Topologically, residues 222–243 are mitochondrial intermembrane; the sequence is GLDQEQLDARKSKPTVSQYRLT. Residues 244 to 264 form a helical membrane-spanning segment; the sequence is THLGTAFFLYMGMLWTGLEIL. H245 provides a ligand contact to heme o. Topologically, residues 265–293 are mitochondrial matrix; that stretch reads RECKWIKNPVQAISLFKKLDNPAIGPMRK. A helical transmembrane segment spans residues 294–314; that stretch reads ISLALLAVSFLTAMSGGMVAG. At 315 to 364 the chain is on the mitochondrial intermembrane side; sequence LDAGWVYNTWPKMGERWFPSSRELMDENFCRREDKKDLWWRNLLENPVTV. A helical membrane pass occupies residues 365 to 387; that stretch reads QLVHRTCAYVAFTSVLAAHMYAI. Position 368 (H368) interacts with heme b. At 388–402 the chain is on the mitochondrial matrix side; the sequence is KKKAVIPRNAMTSLH. The chain crosses the membrane as a helical span at residues 403–423; sequence VMMGVVTLQATLGILTILYLV. Position 424 (P424) is a topological domain, mitochondrial intermembrane. A helical transmembrane segment spans residues 425–445; it reads ISLASIHQAGALALLTSSLVF. Residue H431 coordinates heme b. Over 446–486 the chain is Mitochondrial matrix; the sequence is ASQLRKPRAPMRNVIITLPHSSKVTSGKILSEASKLASKPL.

It belongs to the COX15/CtaA family. Type 2 subfamily. In terms of assembly, forms 200-350 kDa oligomeric complexes independent on heme binding. In addition to form homooligomeric complexes, a portion also associates with the mitochondrial respiratory supercomplexes. Interacts with CcO assembly factors PET117, SHY1, COA3 and COA1, CcO subunit COX13 and cytochrome b-c1 subunit COR1. It depends on heme b as a cofactor.

It localises to the mitochondrion inner membrane. It catalyses the reaction Fe(II)-heme o + 2 A + H2O = Fe(II)-heme a + 2 AH2. Its pathway is porphyrin-containing compound metabolism; heme A biosynthesis; heme A from heme O: step 1/1. Functionally, catalyzes the second reaction in the biosynthesis of heme A, a prosthetic group of mitochondrial cytochrome c oxidase (CcO). Heme A is synthesized from heme B by two sequential enzymatic reactions catalyzed by heme O synthase (HOS/COX10) and heme A synthase (HAS/COX15). HAS catalyzes the conversion of heme O to heme A by two successive hydroxylations of the methyl group at C8, in a reaction that involves matrix ferredoxin YAH1 and ferredoxin reductase ARH1. The first hydroxylation forms heme I, the second hydroxylation results in an unstable dihydroxymethyl group, which spontaneously dehydrates, resulting in the formyl group of heme A. May also play a secondary role in CcO assembly. Plays a role in the maturation of COX1, the heme A-containing structural CcO subunit, possibly by interacting with the COX1-containing sub-assembly complexes that form prior to heme A insertion. May also positively regulate the upstream enzymatic reaction, farnesylation of heme B by HOS/COX10. The protein is Heme A synthase COX15 of Saccharomyces cerevisiae (strain ATCC 204508 / S288c) (Baker's yeast).